The sequence spans 228 residues: Clathrin light chain B (228 aa).

Blocked amino end (Met) is present on M1. Positions 1 to 17 are enriched in low complexity; that stretch reads MADDFGFFSSSESGAPE. The tract at residues 1-80 is disordered; sequence MADDFGFFSS…VNGDVFQEAN (80 aa). Phosphoserine is present on residues S11 and S13. The interval 92-154 is involved in binding clathrin heavy chain; it reads ADRLTQEPES…QVEKNKINNR (63 aa). The residue at position 186 (T186) is a Phosphothreonine. An intrachain disulfide couples C198 to C208. K203 carries the N6-acetyllysine modification. S216 carries the phosphoserine modification.

This sequence belongs to the clathrin light chain family. Clathrin coats are formed from molecules containing 3 heavy chains and 3 light chains. Interacts (via N-terminus) with HIP1. Interacts with HIP1R.

It is found in the cytoplasmic vesicle membrane. Its subcellular location is the membrane. The protein resides in the coated pit. In terms of biological role, clathrin is the major protein of the polyhedral coat of coated pits and vesicles. This Bos taurus (Bovine) protein is Clathrin light chain B (CLTB).